The following is a 123-amino-acid chain: Small ribosomal subunit protein uS11 (123 aa).

The protein belongs to the universal ribosomal protein uS11 family. In terms of assembly, part of the 30S ribosomal subunit. Interacts with proteins S7 and S18. Binds to IF-3.

Functionally, located on the platform of the 30S subunit, it bridges several disparate RNA helices of the 16S rRNA. Forms part of the Shine-Dalgarno cleft in the 70S ribosome. The protein is Small ribosomal subunit protein uS11 of Coxiella burnetii (strain CbuK_Q154) (Coxiella burnetii (strain Q154)).